A 446-amino-acid chain; its full sequence is Ubiquitin carboxyl-terminal hydrolase MINDY-3 (446 aa).

C51 (nucleophile) is an active-site residue. The span at 117–128 (DNSDITDSHPEP) shows a compositional bias: basic and acidic residues. The segment at 117 to 137 (DNSDITDSHPEPESSQPTDTP) is disordered. The active-site Proton acceptor is H288.

This sequence belongs to the MINDY deubiquitinase family. FAM188 subfamily.

The protein localises to the nucleus. The catalysed reaction is Thiol-dependent hydrolysis of ester, thioester, amide, peptide and isopeptide bonds formed by the C-terminal Gly of ubiquitin (a 76-residue protein attached to proteins as an intracellular targeting signal).. Hydrolase that can remove 'Lys-48'-linked conjugated ubiquitin from proteins. The protein is Ubiquitin carboxyl-terminal hydrolase MINDY-3 (mindy3) of Danio rerio (Zebrafish).